The following is a 241-amino-acid chain: Sugar fermentation stimulation protein homolog (241 aa).

The protein belongs to the SfsA family.

The sequence is that of Sugar fermentation stimulation protein homolog from Jannaschia sp. (strain CCS1).